The sequence spans 129 residues: Omega-scoloptoxin(05)-Ssm1a (129 aa).

The N-terminal stretch at 1-24 (MPSLCIIALFGTLTFYTLIPSIHT) is a signal peptide. A propeptide spanning residues 25 to 46 (LKCVRCDGPMSNYDCKTTYPAA) is cleaved from the precursor.

This sequence belongs to the scoloptoxin-05 family. Contains 3 disulfide bonds. Expressed by the venom gland.

The protein localises to the secreted. In terms of biological role, toxin that increase voltage-gated calcium channel (Cav) currents in DRG neurons by 70% and 120%, when 1 uM and 10 uM are tested, respectively. The protein is Omega-scoloptoxin(05)-Ssm1a of Scolopendra mutilans (Chinese red-headed centipede).